The primary structure comprises 699 residues: Large T antigen (699 aa).

Residue Met1 is modified to N-acetylmethionine; by host. The region spanning 12 to 75 (ELMDLLGLER…VKVAHQPDFG (64 aa)) is the J domain. The LXCXE motif motif lies at 105 to 109 (LFCHE). Phosphoserine; by host is present on residues Ser114, Ser122, and Ser125. Residues 115–137 (DEEGTADSQHSTPPKKKRKVEDP) form a disordered region. Thr126 bears the Phosphothreonine; by host mark. A Nuclear localization signal motif is present at residues 127 to 134 (PPKKKRKV). Residues 141 to 256 (PPDLHAFLSQ…EESIQGGLKE (116 aa)) constitute a DNA-binding region (T-ag OBD). The T-ag D1-type zinc finger occupies 267–359 (TKQVSWKLIT…KRVDTLHMTR (93 aa)). Zn(2+) contacts are provided by Cys304, Cys307, His315, and His319. Residues 402-562 (KMDTLIYDFL…IYLRKALNNS (161 aa)) form the SF3 helicase domain. 428–435 (GPIDSGKT) is a binding site for ATP. The disordered stretch occupies residues 637–678 (ETEDSGHGSSTESQSQCFSQASDTSGSADAPASQTPDPYDHD). Polar residues predominate over residues 643-672 (HGSSTESQSQCFSQASDTSGSADAPASQTP). Position 661 is a phosphoserine; by host (Ser661). Lys691 carries the N6-acetyllysine; by host modification. Phosphothreonine; by host is present on Thr695.

Forms homohexamers in the presence of ATP. Interacts with host HDAC1. Interacts (via LXCXE domain) with host RB1; the interaction induces the aberrant dissociation of RB1-E2F1 complex thereby disrupting RB1's activity. Interacts (via LXCXE domain) with host pRB-related proteins RBL1 and RBL2. Interacts (via C-terminus) with host TOP1 and POLA1 allowing DNA replication. Interacts with host TP53, inhibiting TP53 binding to DNA. Interacts with host preinitiation complex components TBP, TFIIA and TFIID to regulate transcription initiation. The cofactor is Mg(2+). In terms of processing, phosphorylated on both serine and threonine residues. Small t antigen inhibits the dephosphorylation by the AC form of PP2A. O-Glycosylated near the C-terminal region. Post-translationally, acetylated by CBP in a TP53-dependent manner.

The protein resides in the host nucleus. The enzyme catalyses Couples ATP hydrolysis with the unwinding of duplex DNA by translocating in the 3'-5' direction.. The catalysed reaction is ATP + H2O = ADP + phosphate + H(+). In terms of biological role, isoform large T antigen is a key early protein essential for both driving viral replication and inducing cellular transformation. Plays a role in viral genome replication by driving entry of quiescent cells into the cell cycle and by autoregulating the synthesis of viral early mRNA. Displays highly oncogenic activities by corrupting the host cellular checkpoint mechanisms that guard cell division and the transcription, replication, and repair of DNA. Participates in the modulation of cellular gene expression preceeding viral DNA replication. This step involves binding to host key cell cycle regulators retinoblastoma protein RB1/pRb and TP53. Induces the disassembly of host E2F1 transcription factors from RB1, thus promoting transcriptional activation of E2F1-regulated S-phase genes. Inhibits host TP53 binding to DNA, abrogating the ability of TP53 to stimulate gene expression. Plays the role of a TFIID-associated factor (TAF) in transcription initiation for all three RNA polymerases, by stabilizing the TBP-TFIIA complex on promoters. Initiates viral DNA replication and unwinding via interactions with the viral origin of replication. Binds two adjacent sites in the SV40 origin. The replication fork movement is facilitated by Large T antigen helicase activity. Has processive 3'-5' DNA helicase activity which requires a short 3' single-stranded region and ATP. Activates the transcription of viral late mRNA, through host TBP and TFIIA stabilization. Interferes with histone deacetylation mediated by HDAC1, leading to activation of transcription. The chain is Large T antigen from Papio hamadryas ursinus (Chacma baboon).